The sequence spans 204 residues: Ribosomal RNA small subunit methyltransferase G (204 aa).

Residues G74, L79, 125-126 (AY), and R138 contribute to the S-adenosyl-L-methionine site.

This sequence belongs to the methyltransferase superfamily. RNA methyltransferase RsmG family.

Its subcellular location is the cytoplasm. In terms of biological role, specifically methylates the N7 position of a guanine in 16S rRNA. This is Ribosomal RNA small subunit methyltransferase G from Brachyspira hyodysenteriae (strain ATCC 49526 / WA1).